The sequence spans 270 residues: 2-aminoethanethiol dioxygenase (270 aa).

The interval 21 to 48 (FRGSGGGRGASDRDAASGPEAPMQPGFP) is disordered. Fe cation contacts are provided by H112 and H114. Positions 140-164 (GGQRPRALPPEQQFEPPLQPREREA) are disordered. H193 contacts Fe cation. Positions 220-223 (CHYY) form a cross-link, 3'-(S-cysteinyl)-tyrosine (Cys-Tyr).

Monomer. Requires Fe cation as cofactor.

The enzyme catalyses cysteamine + O2 = hypotaurine + H(+). It carries out the reaction N-terminal L-cysteinyl-[protein] + O2 = N-terminal S-hydroxy-S-oxy-L-cysteinyl-[protein] + H(+). Plays a vital role in regulating thiol metabolism and preserving oxygen homeostasis by oxidizing the sulfur of cysteamine and N-terminal cysteine-containing proteins to their corresponding sulfinic acids using O2 as a cosubstrate. Catalyzes the oxidation of cysteamine (2-aminoethanethiol) to hypotaurine. Catalyzes the oxidation of regulators of G-protein signaling 4 (RGS4) and 5 (RGS5) and interleukin-32 (IL32). In Homo sapiens (Human), this protein is 2-aminoethanethiol dioxygenase (ADO).